We begin with the raw amino-acid sequence, 284 residues long: MSWFHRERAGINRTQIKKSRVPQGMWVKCPGCSATLLAKDLDANLNVCPTCGHHHRIGARRRLESLLDAATWQELDSGMTSVDFLQFKDSKSYQERIDSALSKGGSRDAVVCVEGSIEGTAVQVAVFDFSFMGGSMGSVVGEKITRAIERGVQKRQPVIIVSASGGARMQESILSLMQMAKTSAALAKLKDAGLPFISILTDPTTGGVTASFAMLGDINIAEPKALIGFAGPRVIEQTLRQKLPDGFQRAEYLLEHGMLDVIVPRTEMRAKLASILGILYRPAA.

The CoA carboxyltransferase N-terminal domain occupies 25–284 (MWVKCPGCSA…ILGILYRPAA (260 aa)). Zn(2+) is bound by residues Cys-29, Cys-32, Cys-48, and Cys-51. A C4-type zinc finger spans residues 29 to 51 (CPGCSATLLAKDLDANLNVCPTC).

The protein belongs to the AccD/PCCB family. As to quaternary structure, acetyl-CoA carboxylase is a heterohexamer composed of biotin carboxyl carrier protein (AccB), biotin carboxylase (AccC) and two subunits each of ACCase subunit alpha (AccA) and ACCase subunit beta (AccD). Requires Zn(2+) as cofactor.

The protein localises to the cytoplasm. It catalyses the reaction N(6)-carboxybiotinyl-L-lysyl-[protein] + acetyl-CoA = N(6)-biotinyl-L-lysyl-[protein] + malonyl-CoA. It participates in lipid metabolism; malonyl-CoA biosynthesis; malonyl-CoA from acetyl-CoA: step 1/1. Functionally, component of the acetyl coenzyme A carboxylase (ACC) complex. Biotin carboxylase (BC) catalyzes the carboxylation of biotin on its carrier protein (BCCP) and then the CO(2) group is transferred by the transcarboxylase to acetyl-CoA to form malonyl-CoA. The protein is Acetyl-coenzyme A carboxylase carboxyl transferase subunit beta of Pelobacter propionicus (strain DSM 2379 / NBRC 103807 / OttBd1).